Here is an 82-residue protein sequence, read N- to C-terminus: Proline, histidine and glycine-rich protein 1 (82 aa).

A disordered region spans residues 20-82; sequence HCGPPPGHGP…PGHPPPGPHH (63 aa).

The chain is Proline, histidine and glycine-rich protein 1 (PHGR1) from Homo sapiens (Human).